We begin with the raw amino-acid sequence, 742 residues long: MQLTHDIQPEKIEKDRLYLDMGLSDEEFQRIKQILGRHPNFTETGIFSVMWSEHCSYKTSKPLLKKFPTDGPHVLQGPGEGAGVIDIGDEQAVVFKIESHNHPSAVEPYQGAATGVGGIIRDVFSMGARPIASLNSLRFGPLTNNRTKYLFSEVVAGIAGYGNCVGVPTVGGEVQFDESYEDNPLVNAMCVGLINHKDVQKGIAAGIGNTILYAGPPTGRDGIHGATFASDDLAEDSNKDRPAVQVGDPFMEKLLIEACLEVIQSDALVGIQDMGAAGLTSSASEMASKAGTGLEMNLDLVPQREQGMTAYEMMLSESQERMLLCVQAGREQEIIDIFEKYGLKSVPVGKVIEEKVFRIKHLDEVVADIPVDSLADDAPVYNMPSKEAAYYRAFQQMDIATPAIEDYANTLKQLLQQPTIANKEWVYDQYDSMVQTNTVVTPGSDAAVVRIKGTEKALAMTTDCNSRYIYLDPETGGKIAVAEAARNIVCSGAKPLGLTDGLNFGNPTNPEIFWQMEKSVEGMSAACDALHTPVISGNVSLYNQSKGKSIYPTPIVGMVGLHESTQHITPSYFQEKEDVIYCIGEAKAEFGGSELQHLYSGKYEGKAPHIDLDVEAERQEKLLSAIKEGIISSAHDISEGGLAIALAESLFNGQGLGAEINVVGDATVELFSESQSRFLVSVNKKHANAFESHFPEAAKLGKVTDQGQLTISISDKTIIHERVEELENLWKGAIPCLLKSKA.

His-54 is a catalytic residue. 2 residues coordinate ATP: Tyr-57 and Lys-96. Position 98 (Glu-98) interacts with Mg(2+). Substrate-binding positions include Ser-99–His-102 and Arg-121. His-100 (proton acceptor) is an active-site residue. Residue Asp-122 participates in Mg(2+) binding. Substrate is bound at residue Gln-245. Asp-273 contacts Mg(2+). Glu-317–Gln-319 is a binding site for substrate. Residues Asp-500 and Gly-537 each coordinate ATP. Residue Asn-538 coordinates Mg(2+). Ser-540 lines the substrate pocket.

This sequence belongs to the FGAMS family. In terms of assembly, monomer. Part of the FGAM synthase complex composed of 1 PurL, 1 PurQ and 2 PurS subunits.

It localises to the cytoplasm. It carries out the reaction N(2)-formyl-N(1)-(5-phospho-beta-D-ribosyl)glycinamide + L-glutamine + ATP + H2O = 2-formamido-N(1)-(5-O-phospho-beta-D-ribosyl)acetamidine + L-glutamate + ADP + phosphate + H(+). It participates in purine metabolism; IMP biosynthesis via de novo pathway; 5-amino-1-(5-phospho-D-ribosyl)imidazole from N(2)-formyl-N(1)-(5-phospho-D-ribosyl)glycinamide: step 1/2. Part of the phosphoribosylformylglycinamidine synthase complex involved in the purines biosynthetic pathway. Catalyzes the ATP-dependent conversion of formylglycinamide ribonucleotide (FGAR) and glutamine to yield formylglycinamidine ribonucleotide (FGAM) and glutamate. The FGAM synthase complex is composed of three subunits. PurQ produces an ammonia molecule by converting glutamine to glutamate. PurL transfers the ammonia molecule to FGAR to form FGAM in an ATP-dependent manner. PurS interacts with PurQ and PurL and is thought to assist in the transfer of the ammonia molecule from PurQ to PurL. The sequence is that of Phosphoribosylformylglycinamidine synthase subunit PurL from Oceanobacillus iheyensis (strain DSM 14371 / CIP 107618 / JCM 11309 / KCTC 3954 / HTE831).